The following is an 85-amino-acid chain: Large ribosomal subunit protein bL27 (85 aa).

The interval 1 to 20 (MATKKAGGSTRNGRDSEAKR) is disordered.

This sequence belongs to the bacterial ribosomal protein bL27 family.

The polypeptide is Large ribosomal subunit protein bL27 (Actinobacillus succinogenes (strain ATCC 55618 / DSM 22257 / CCUG 43843 / 130Z)).